The primary structure comprises 404 residues: S-adenosylmethionine synthase (404 aa).

139-144 contributes to the ATP binding site; that stretch reads GKGSTD.

It belongs to the AdoMet synthase 2 family. It depends on Mg(2+) as a cofactor.

The enzyme catalyses L-methionine + ATP + H2O = S-adenosyl-L-methionine + phosphate + diphosphate. The protein operates within amino-acid biosynthesis; S-adenosyl-L-methionine biosynthesis; S-adenosyl-L-methionine from L-methionine: step 1/1. Catalyzes the formation of S-adenosylmethionine from methionine and ATP. The sequence is that of S-adenosylmethionine synthase from Saccharolobus islandicus (strain Y.N.15.51 / Yellowstone #2) (Sulfolobus islandicus).